Reading from the N-terminus, the 134-residue chain is MKFSILPMIASAMAVSISYDPIYAADLSMGSVACSNGDHGLMAQYPTLGEVPGFPNVGGIPDIAGWDSPSCGTCWKVTIPNGNSIFIRGVDSGRGGFNVNPTAFTKLVGSTEAGRVDNVNYVQVDLSNCINGAN.

An N-terminal signal peptide occupies residues 1–14 (MKFSILPMIASAMA). The tract at residues 18–20 (SYD) is binding of oligomers of N-acetylglucosamine (GlcNAc). Binding of N-acetylglucosamine tetramer (GlcNAc-4) regions lie at residues 31–43 (SVACSNGDHGLMA), 65–68 (GWDS), and 91–95 (DSGRG). 2 disulfide bridges follow: Cys34-Cys71 and Cys74-Cys129. The segment at 113–116 (AGRV) is binding of oligomers of N-acetylglucosamine (GlcNAc).

The protein belongs to the cerato-platanin family. Monomer.

It is found in the secreted. The protein resides in the cell wall. Functionally, phytotoxin which causes production of phytoalexin in platanus acerifolia, platanus occidentalis and platanus orientalis. Induces cell necrosis in tobacco leaves, and in callus cells and leaves of P.acerifolia. Induces reactive oxygen species (ROS) synthesis, nitric oxide (NO) production and mitogen-activated protein kinases (MAPKs) phosphorylation in the leaves of A.thaliana and P.acerifolia. Results in H(2)O(2) production on the epidermis around the stomata, rapid closure of the stomata, reduced photosynthetic and CO(2) assimilation rate, and an increase in a number of volatile organic compound (VOC) emission in A.thaliana leaves. Induces overexpression of genes related to salicylic acid- and ethylene-signaling, camalexin synthesis, ROS production and oxidative stress, and genes of various receptor kinases, and down-regulation of a number of jasmonic acid (JA)-signaling genes in A.thaliana leaves. Renders resistance against C.platani in A.thaliana and P.acerifolia. Renders localised resistance of A.thaliana against infection by virulent foliar pathogens B.cinerea and P.syringae pv. tomato. Binds cellulose analog carboxymethyl cellulose (CMC). Expansin-like protein with probable fungal and plant cell wall loosening activity based on its non-enzymatic cellulose weakening activity in vitro. Increases glucose production by cellulase after pre-incubation of cellulose with this protein. In contrast, according to PubMed:23512479, no synergistic effect with cellulases. May have a structural role in the fungal cell wall based on its ability to bind chitin, but does not bind beta-1,3-glucan. This is Cerato-platanin from Ceratocystis fimbriata f. sp. platani.